A 377-amino-acid chain; its full sequence is Carbamoyl phosphate synthase small chain (377 aa).

The segment at 1–186 is CPSase; it reads MSTPALLVLA…LGKGFVTPDE (186 aa). S47, G238, and G240 together coordinate L-glutamine. Positions 190 to 377 constitute a Glutamine amidotransferase type-1 domain; that stretch reads HVVAYDFGVK…IGNMKAAKRA (188 aa). The active-site Nucleophile is the C266. L-glutamine contacts are provided by L267, Q270, N308, G310, and F311. Residues H350 and E352 contribute to the active site.

Belongs to the CarA family. Composed of two chains; the small (or glutamine) chain promotes the hydrolysis of glutamine to ammonia, which is used by the large (or ammonia) chain to synthesize carbamoyl phosphate. Tetramer of heterodimers (alpha,beta)4.

The enzyme catalyses hydrogencarbonate + L-glutamine + 2 ATP + H2O = carbamoyl phosphate + L-glutamate + 2 ADP + phosphate + 2 H(+). It carries out the reaction L-glutamine + H2O = L-glutamate + NH4(+). Its pathway is amino-acid biosynthesis; L-arginine biosynthesis; carbamoyl phosphate from bicarbonate: step 1/1. It participates in pyrimidine metabolism; UMP biosynthesis via de novo pathway; (S)-dihydroorotate from bicarbonate: step 1/3. Functionally, small subunit of the glutamine-dependent carbamoyl phosphate synthetase (CPSase). CPSase catalyzes the formation of carbamoyl phosphate from the ammonia moiety of glutamine, carbonate, and phosphate donated by ATP, constituting the first step of 2 biosynthetic pathways, one leading to arginine and/or urea and the other to pyrimidine nucleotides. The small subunit (glutamine amidotransferase) binds and cleaves glutamine to supply the large subunit with the substrate ammonia. This chain is Carbamoyl phosphate synthase small chain, found in Neisseria meningitidis serogroup B (strain ATCC BAA-335 / MC58).